The sequence spans 423 residues: Probable histone-binding protein rbbD (423 aa).

WD repeat units lie at residues N119–T159, G172–S212, G222–H262, A266–H306, S310–N350, and G367–R407.

The protein belongs to the WD repeat RBAP46/RBAP48/MSI1 family. In terms of assembly, probably binds directly to helix 1 of the histone fold of histone H4, a region that is not accessible when H4 is in chromatin.

The protein resides in the nucleus. Functionally, core histone-binding subunit that may target chromatin assembly factors, chromatin remodeling factors and histone deacetylases to their histone substrates in a manner that is regulated by nucleosomal DNA. Component of several complexes which regulate chromatin metabolism. This chain is Probable histone-binding protein rbbD (rbbD), found in Dictyostelium discoideum (Social amoeba).